Reading from the N-terminus, the 401-residue chain is Exodeoxyribonuclease 7 large subunit (401 aa).

It belongs to the XseA family. Heterooligomer composed of large and small subunits.

The protein resides in the cytoplasm. It catalyses the reaction Exonucleolytic cleavage in either 5'- to 3'- or 3'- to 5'-direction to yield nucleoside 5'-phosphates.. In terms of biological role, bidirectionally degrades single-stranded DNA into large acid-insoluble oligonucleotides, which are then degraded further into small acid-soluble oligonucleotides. The protein is Exodeoxyribonuclease 7 large subunit of Clostridium botulinum (strain Loch Maree / Type A3).